Reading from the N-terminus, the 195-residue chain is Imidazoleglycerol-phosphate dehydratase (195 aa).

The protein belongs to the imidazoleglycerol-phosphate dehydratase family.

The protein localises to the cytoplasm. The enzyme catalyses D-erythro-1-(imidazol-4-yl)glycerol 3-phosphate = 3-(imidazol-4-yl)-2-oxopropyl phosphate + H2O. It functions in the pathway amino-acid biosynthesis; L-histidine biosynthesis; L-histidine from 5-phospho-alpha-D-ribose 1-diphosphate: step 6/9. In Exiguobacterium sp. (strain ATCC BAA-1283 / AT1b), this protein is Imidazoleglycerol-phosphate dehydratase.